A 330-amino-acid chain; its full sequence is Ketol-acid reductoisomerase (NADP(+)) (330 aa).

The region spanning 1 to 181 (MNIYYEQDAD…GGTKAGVIET (181 aa)) is the KARI N-terminal Rossmann domain. Residues 24-27 (YGSQ), lysine 47, serine 50, serine 52, and 82-85 (DQTQ) contribute to the NADP(+) site. Residue histidine 107 is part of the active site. Glycine 133 lines the NADP(+) pocket. A KARI C-terminal knotted domain is found at 182-327 (SFKDETETDL…AKLRGMMSWL (146 aa)). Mg(2+)-binding residues include aspartate 190, glutamate 194, glutamate 226, and glutamate 230. Position 251 (serine 251) interacts with substrate.

It belongs to the ketol-acid reductoisomerase family. It depends on Mg(2+) as a cofactor.

The enzyme catalyses (2R)-2,3-dihydroxy-3-methylbutanoate + NADP(+) = (2S)-2-acetolactate + NADPH + H(+). It catalyses the reaction (2R,3R)-2,3-dihydroxy-3-methylpentanoate + NADP(+) = (S)-2-ethyl-2-hydroxy-3-oxobutanoate + NADPH + H(+). Its pathway is amino-acid biosynthesis; L-isoleucine biosynthesis; L-isoleucine from 2-oxobutanoate: step 2/4. The protein operates within amino-acid biosynthesis; L-valine biosynthesis; L-valine from pyruvate: step 2/4. Involved in the biosynthesis of branched-chain amino acids (BCAA). Catalyzes an alkyl-migration followed by a ketol-acid reduction of (S)-2-acetolactate (S2AL) to yield (R)-2,3-dihydroxy-isovalerate. In the isomerase reaction, S2AL is rearranged via a Mg-dependent methyl migration to produce 3-hydroxy-3-methyl-2-ketobutyrate (HMKB). In the reductase reaction, this 2-ketoacid undergoes a metal-dependent reduction by NADPH to yield (R)-2,3-dihydroxy-isovalerate. This is Ketol-acid reductoisomerase (NADP(+)) from Chlorobaculum tepidum (strain ATCC 49652 / DSM 12025 / NBRC 103806 / TLS) (Chlorobium tepidum).